A 258-amino-acid chain; its full sequence is Transcription factor RSL3 (258 aa).

The D-box signature appears at 98 to 105; it reads RKLLDVEN. Residues 119 to 178 form a disordered region; that stretch reads ELAKSKKKQRVSSESNTVDESNTNWVDGQSLSNSSDDEKASVTSVKGKTRATKGTATDPQ. Over residues 130–152 the composition is skewed to polar residues; that stretch reads SSESNTVDESNTNWVDGQSLSNS. Residues 173-186 are basic motif; the sequence is TATDPQSLYARKRR. The 50-residue stretch at 173–222 folds into the bHLH domain; it reads TATDPQSLYARKRREKINERLKTLQNLVPNGTKVDISTMLEEAVHYVKFL. The helix-loop-helix motif stretch occupies residues 187–222; sequence EKINERLKTLQNLVPNGTKVDISTMLEEAVHYVKFL.

Homodimer. In terms of processing, ubiquitinated. Ubiquitination leads to its subsequent degradation by the 26S proteasome. Expressed constitutively in roots, leaves, and flowers. Expressed in root epidermal hair cells.

It localises to the nucleus. Its function is as follows. Transcription factor involved in the regulation of root hair elongation. Is sufficient to promote postmitotic cell growth in root-hair cells and is a direct transcriptional target of RHD6 and RSL1. Involved in the regulation of root hair elongation in response to low phosphate. Controls root hair cell growth by regulating the expression of genes encoding proteins involved in cell signaling, cell wall modification and secretion. In Arabidopsis thaliana (Mouse-ear cress), this protein is Transcription factor RSL3.